The following is a 211-amino-acid chain: Small ribosomal subunit protein bS6c alpha (211 aa).

A compositionally biased stretch (low complexity) spans 1–19 (MATFSLTSTLPSSSPTTSL). 2 disordered regions span residues 1–25 (MATFSLTSTLPSSSPTTSLHSIPKP) and 80–100 (DEDPPSTPPAGLAVEEKPEPQ). The N-terminal 65 residues, 1–65 (MATFSLTSTL…YGPYVKAIAL (65 aa)), are a transit peptide targeting the chloroplast.

This sequence belongs to the bacterial ribosomal protein bS6 family. As to quaternary structure, component of the chloroplast small ribosomal subunit (SSU). Mature 70S chloroplast ribosomes of higher plants consist of a small (30S) and a large (50S) subunit. The 30S small subunit contains 1 molecule of ribosomal RNA (16S rRNA) and 24 different proteins. The 50S large subunit contains 3 rRNA molecules (23S, 5S and 4.5S rRNA) and 33 different proteins.

Its subcellular location is the plastid. It is found in the chloroplast. Component of the chloroplast ribosome (chloro-ribosome), a dedicated translation machinery responsible for the synthesis of chloroplast genome-encoded proteins, including proteins of the transcription and translation machinery and components of the photosynthetic apparatus. The polypeptide is Small ribosomal subunit protein bS6c alpha (RPS6) (Spinacia oleracea (Spinach)).